Here is a 160-residue protein sequence, read N- to C-terminus: uncharacterized protein (160 aa).

The HTH marR-type domain maps to 20-152 (EREIWVLYMK…VYEGLSILSR (133 aa)). The segment at residues 66 to 89 (VSDIAEKMGASLSNTTGLLDRLEK) is a DNA-binding region (H-T-H motif).

This is an uncharacterized protein from Bacillus subtilis (strain 168).